The sequence spans 295 residues: Pyridoxal 5'-phosphate synthase subunit PdxS (295 aa).

D-ribose 5-phosphate is bound at residue D25. K82 (schiff-base intermediate with D-ribose 5-phosphate) is an active-site residue. Residue G154 participates in D-ribose 5-phosphate binding. R166 provides a ligand contact to D-glyceraldehyde 3-phosphate. Residues G215 and 236 to 237 (GS) contribute to the D-ribose 5-phosphate site.

This sequence belongs to the PdxS/SNZ family. As to quaternary structure, in the presence of PdxT, forms a dodecamer of heterodimers.

It catalyses the reaction aldehydo-D-ribose 5-phosphate + D-glyceraldehyde 3-phosphate + L-glutamine = pyridoxal 5'-phosphate + L-glutamate + phosphate + 3 H2O + H(+). The protein operates within cofactor biosynthesis; pyridoxal 5'-phosphate biosynthesis. Its function is as follows. Catalyzes the formation of pyridoxal 5'-phosphate from ribose 5-phosphate (RBP), glyceraldehyde 3-phosphate (G3P) and ammonia. The ammonia is provided by the PdxT subunit. Can also use ribulose 5-phosphate and dihydroxyacetone phosphate as substrates, resulting from enzyme-catalyzed isomerization of RBP and G3P, respectively. The sequence is that of Pyridoxal 5'-phosphate synthase subunit PdxS from Listeria innocua serovar 6a (strain ATCC BAA-680 / CLIP 11262).